We begin with the raw amino-acid sequence, 182 residues long: Vomeronasal secretory protein 1 (182 aa).

The signal sequence occupies residues 1–18 (MRALLLIISFCLVAVLQA). An N-linked (GlcNAc...) asparagine glycan is attached at Asn-30. Cys-76 and Cys-168 are disulfide-bonded.

Belongs to the calycin superfamily. Lipocalin family. Specifically expressed in vomeronasal and posterior glands of the nasal septum, the ducts of which open into the lumen of the vomeronasal organ.

The protein localises to the secreted. Transport of lipophilic molecules, possible pheromone-carrier. This Mus musculus (Mouse) protein is Vomeronasal secretory protein 1 (Lcn3).